A 134-amino-acid chain; its full sequence is Protein Turandot E (134 aa).

The signal sequence occupies residues 1–38 (MSYNRTLHSTTSILKMNSALQISCLLLVLGCLLGSGHG).

Belongs to the Turandot family.

Its subcellular location is the secreted. In terms of biological role, a humoral factor that may play a role in stress tolerance. The chain is Protein Turandot E from Drosophila yakuba (Fruit fly).